The primary structure comprises 248 residues: MKSSTQTILEHTAIPRHIAVIMDGNGRWAKKRFLPRIMGHKRGLDALENMVKHCAKLGVQYLTVFAFSTENWRRPEDEVSFLMGLFLQALQKQVRRLHENNMRLKILGSRERFNRQILQGIEEAEALTANNTGLTLSIAADYGGRWDILQAANKLIAEGVSEITEDTLAKHLMLGDAPEPDLFIRTGGETRISNFLLWQMAYAELYFTDILWPDFDETALDAAVASFQKRERRFGRTSEQLPIGQQRN.

Aspartate 23 is a catalytic residue. Mg(2+) is bound at residue aspartate 23. Substrate is bound by residues 24 to 27, tryptophan 28, arginine 36, histidine 40, and 68 to 70; these read GNGR and STE. The Proton acceptor role is filled by asparagine 71. Substrate contacts are provided by residues tryptophan 72, arginine 74, arginine 185, and 191–193; that span reads RIS. Residue glutamate 204 participates in Mg(2+) binding.

Belongs to the UPP synthase family. In terms of assembly, homodimer. It depends on Mg(2+) as a cofactor.

Catalyzes the condensation of isopentenyl diphosphate (IPP) with allylic pyrophosphates generating different type of terpenoids. The sequence is that of Isoprenyl transferase from Neisseria gonorrhoeae (strain ATCC 700825 / FA 1090).